Here is a 117-residue protein sequence, read N- to C-terminus: DNA-directed RNA polymerase II subunit RPB11 (117 aa).

Methionine 1 is subject to N-acetylmethionine.

The protein belongs to the archaeal Rpo11/eukaryotic RPB11/RPC19 RNA polymerase subunit family. As to quaternary structure, component of the RNA polymerase II (Pol II) core complex consisting of 12 subunits: a ten-subunit catalytic core composed of POLR2A/RPB1, POLR2B/RPB2, POLR2C/RPB3, POLR2I/RPB9, POLR2J/RPB11, POLR2E/RPABC1, POLR2F/RPABC2, POLR2H/RPABC3, POLR2K/RPABC4 and POLR2L/RPABC5 and a mobile stalk composed of two subunits POLR2D/RPB4 and POLR2G/RPB7, protruding from the core and functioning primarily in transcription initiation. Part of Pol II(G) complex, in which Pol II core associates with an additional subunit POLR2M; unlike conventional Pol II, Pol II(G) functions as a transcriptional repressor. Part of TBP-based Pol II pre-initiation complex (PIC), in which Pol II core assembles with general transcription factors and other specific initiation factors including GTF2E1, GTF2E2, GTF2F1, GTF2F2, TCEA1, ERCC2, ERCC3, GTF2H2, GTF2H3, GTF2H4, GTF2H5, GTF2A1, GTF2A2, GTF2B and TBP; this large multi-subunit PIC complex mediates DNA unwinding and targets Pol II core to the transcription start site where the first phosphodiester bond forms. Interacts with PTPN6; this interaction promotes the recruitment of RNA pol II to the PCK1 promoter.

It is found in the nucleus. DNA-dependent RNA polymerase catalyzes the transcription of DNA into RNA using the four ribonucleoside triphosphates as substrates. Component of RNA polymerase II which synthesizes mRNA precursors and many functional non-coding RNAs. Pol II is the central component of the basal RNA polymerase II transcription machinery. It is composed of mobile elements that move relative to each other. POLR2J/RPB11 is part of the core element with the central large cleft. The chain is DNA-directed RNA polymerase II subunit RPB11 (POLR2J) from Bos taurus (Bovine).